The sequence spans 111 residues: Secreted RxLR effector protein 82 (111 aa).

An N-terminal signal peptide occupies residues 1–17 (MFHLYLLLVFETRYTCL). A RxLR motif is present at residues 28-31 (RWLR).

Belongs to the RxLR effector family.

It is found in the secreted. Its subcellular location is the host nucleus. Functionally, secreted effector that acts as an elicitor that induces cell death in host plant cells. This chain is Secreted RxLR effector protein 82, found in Plasmopara viticola (Downy mildew of grapevine).